Consider the following 504-residue polypeptide: UDP-N-acetylmuramoylalanine--D-glutamate ligase (504 aa).

Glycine 132 to threonine 138 serves as a coordination point for ATP. Residues alanine 284–glycine 310 are disordered.

Belongs to the MurCDEF family.

Its subcellular location is the cytoplasm. It catalyses the reaction UDP-N-acetyl-alpha-D-muramoyl-L-alanine + D-glutamate + ATP = UDP-N-acetyl-alpha-D-muramoyl-L-alanyl-D-glutamate + ADP + phosphate + H(+). It functions in the pathway cell wall biogenesis; peptidoglycan biosynthesis. In terms of biological role, cell wall formation. Catalyzes the addition of glutamate to the nucleotide precursor UDP-N-acetylmuramoyl-L-alanine (UMA). This chain is UDP-N-acetylmuramoylalanine--D-glutamate ligase, found in Paraburkholderia phymatum (strain DSM 17167 / CIP 108236 / LMG 21445 / STM815) (Burkholderia phymatum).